The chain runs to 25 residues: Caerin 1.1 (25 aa).

Leucine amide is present on leucine 25.

As to expression, expressed by the skin dorsal glands.

It localises to the secreted. Antibacterial peptide with wide spectrum of activity. Active against the Gram-positive bacteria B.cereus (MIC=50 ug/ml), E.faecalis (MIC=25 ug/ml), L.lactis (MIC=1.5 ug/ml), L.innocua (MIC=25 ug/ml), S.aureus (MIC=3 ug/ml), S.epidermidis (MIC=12 ug/ml) and S.uberis (MIC=12 ug/ml), and against the Gram-negative bacteria E.coli (MIC=100 ug/ml) and P.multocida (MIC=25 ug/ml). The chain is Caerin 1.1 from Litoria peronii (Emerald spotted tree frog).